The following is a 371-amino-acid chain: Chaperone protein DnaJ (371 aa).

Positions D5 to G69 constitute a J domain. The segment at G133–R215 adopts a CR-type zinc-finger fold. Positions 146, 149, 163, 166, 189, 192, 203, and 206 each coordinate Zn(2+). 4 CXXCXGXG motif repeats span residues C146 to G153, C163 to G170, C189 to G196, and C203 to G210.

The protein belongs to the DnaJ family. In terms of assembly, homodimer. Requires Zn(2+) as cofactor.

It is found in the cytoplasm. Its function is as follows. Participates actively in the response to hyperosmotic and heat shock by preventing the aggregation of stress-denatured proteins and by disaggregating proteins, also in an autonomous, DnaK-independent fashion. Unfolded proteins bind initially to DnaJ; upon interaction with the DnaJ-bound protein, DnaK hydrolyzes its bound ATP, resulting in the formation of a stable complex. GrpE releases ADP from DnaK; ATP binding to DnaK triggers the release of the substrate protein, thus completing the reaction cycle. Several rounds of ATP-dependent interactions between DnaJ, DnaK and GrpE are required for fully efficient folding. Also involved, together with DnaK and GrpE, in the DNA replication of plasmids through activation of initiation proteins. The sequence is that of Chaperone protein DnaJ from Bacillus cereus (strain AH820).